The sequence spans 230 residues: Bidirectional sugar transporter SWEET16 (230 aa).

At 1–3 (MAD) the chain is on the extracellular side. A helical membrane pass occupies residues 4 to 24 (LSFYVGVIGNVISVLVFLSPV). Residues 6–92 (FYVGVIGNVI…LIFLFFVPKS (87 aa)) form the MtN3/slv 1 domain. Topologically, residues 25–40 (ETFWRIVQRRSTEEYE) are cytoplasmic. A helical membrane pass occupies residues 41–61 (CFPYICTLMSSSLWTYYGIVT). At 62-69 (PGEYLVST) the chain is on the extracellular side. The chain crosses the membrane as a helical span at residues 70 to 90 (VNGFGALAESIYVLIFLFFVP). The Cytoplasmic portion of the chain corresponds to 91–93 (KSR). A helical transmembrane segment spans residues 94-114 (FLKTVVVVLALNVCFPVIAIA). The Extracellular segment spans residues 115-128 (GTRTLFGDANSRSS). The helical transmembrane segment at 129 to 149 (SMGFICATLNIIMYGSPLSAI) threads the bilayer. One can recognise a MtN3/slv 2 domain in the interval 129 to 212 (SMGFICATLN…LLIYAYYRNA (84 aa)). Over 150-162 (KTVVTTRSVQFMP) the chain is Cytoplasmic. A helical membrane pass occupies residues 163 to 183 (FWLSFFLFLNGAIWGVYALLL). Residues 184–185 (HD) lie on the Extracellular side of the membrane. Residues 186-206 (MFLLVPNGMGFFLGIMQLLIY) traverse the membrane as a helical segment. The Cytoplasmic segment spans residues 207–230 (AYYRNAEPIVEDEEGLIPNQPLLA).

Belongs to the SWEET sugar transporter family. Forms homooligomers and heterooligomers with SWEET1, SWEET7, SWEET8, SWEET9 and SWEET17. Mostly expressed in the cortex of mature roots, and, to a lower extent, in aerial organs such as leaves, stems, and flowers. Mainly present in vascular parenchyma cells, especially in the petiole vasculature, flower stalks and at the base of individual, not fully developed flowers.

It is found in the vacuole membrane. Its function is as follows. Mediates both low-affinity uptake and efflux of sugar across the vacuolar membrane. Regulates sugars homeostasis in leaves and roots by exporting/importing them through the tonoplast regarding metabolic demand. Acts as a vacuolar hexose transporter, such as glucose (Glc), fructose (Fru), and sucrose (Suc). The protein is Bidirectional sugar transporter SWEET16 of Arabidopsis thaliana (Mouse-ear cress).